A 97-amino-acid chain; its full sequence is ATP-dependent Clp protease adapter protein ClpS (97 aa).

Belongs to the ClpS family. As to quaternary structure, binds to the N-terminal domain of the chaperone ClpA.

In terms of biological role, involved in the modulation of the specificity of the ClpAP-mediated ATP-dependent protein degradation. The polypeptide is ATP-dependent Clp protease adapter protein ClpS (Nostoc sp. (strain PCC 7120 / SAG 25.82 / UTEX 2576)).